A 101-amino-acid polypeptide reads, in one-letter code: Large ribosomal subunit protein bL20 (101 aa).

This sequence belongs to the bacterial ribosomal protein bL20 family.

Functionally, binds directly to 23S ribosomal RNA and is necessary for the in vitro assembly process of the 50S ribosomal subunit. It is not involved in the protein synthesizing functions of that subunit. The polypeptide is Large ribosomal subunit protein bL20 (rplT) (Carsonella ruddii (strain PV)).